The chain runs to 154 residues: Transcriptional repressor NrdR (154 aa).

The segment at 3 to 34 (CPFCRHSDSRVIDSRETDEGQAIRRRRSCPEC) is a zinc-finger region. The region spanning 46–136 (VAVVKRSGVT…VYRSFSSADD (91 aa)) is the ATP-cone domain.

This sequence belongs to the NrdR family. The cofactor is Zn(2+).

In terms of biological role, negatively regulates transcription of bacterial ribonucleotide reductase nrd genes and operons by binding to NrdR-boxes. The protein is Transcriptional repressor NrdR of Mycobacterium leprae (strain Br4923).